The sequence spans 473 residues: ATP synthase subunit beta (473 aa).

Glycine 156–threonine 163 is a binding site for ATP.

It belongs to the ATPase alpha/beta chains family. F-type ATPases have 2 components, CF(1) - the catalytic core - and CF(0) - the membrane proton channel. CF(1) has five subunits: alpha(3), beta(3), gamma(1), delta(1), epsilon(1). CF(0) has three main subunits: a(1), b(2) and c(9-12). The alpha and beta chains form an alternating ring which encloses part of the gamma chain. CF(1) is attached to CF(0) by a central stalk formed by the gamma and epsilon chains, while a peripheral stalk is formed by the delta and b chains.

Its subcellular location is the cell inner membrane. The enzyme catalyses ATP + H2O + 4 H(+)(in) = ADP + phosphate + 5 H(+)(out). Produces ATP from ADP in the presence of a proton gradient across the membrane. The catalytic sites are hosted primarily by the beta subunits. This Desulfovibrio desulfuricans (strain ATCC 27774 / DSM 6949 / MB) protein is ATP synthase subunit beta.